We begin with the raw amino-acid sequence, 743 residues long: MGPSAHLISALGVIIMATMVAAYEPETYASPPPLYSSPLPEVEYKTPPLPYVDSSPPPTYTPAPEVEYKSPPPPYVYSSPPPPTYSPSPKVDYKSPPPPYVYSSPPPPYYSPSPKVDYKSPPPPYVYNSPPPPYYSPSPKVDYKSPPPPYVYSSPPPPYYSPSPKVEYKSPPPPYVYSSPPPPYYSPSPKVDYKSPPPPYVYSSPPPPYYSPSPKVEYKSPPPPYVYSSPPPPYYSPSPKVDYKSPPPPYVYSSPPPPYYSPSPKVDYKSPPPPYVYSSPPPPYYSPSPKVDYKSPPPPYVYSSPPPPYYSPSPKVDYKSPPPPYVYSSPPPPYYSPSPKVDYKSPPPPYVYSSPPPPTYSPSPKVDYKSPPPPYVYSSPPPPYYSPSPKVEYKSPPPPYVYSSPPPPTYSPSPKVYYKSPPPPYVYSSPPPPYYSPSPKVYYKSPPPPYVYSSPPPPYYSPSPKVYYKSPPPPYVYSSPPPPYYSPSPKVYYKSPPPPYVYSSPPPPYYSPSPKVYYKSPPPPYVYSSPPPPYYSPSPKVHYKSPPPPYVYSSPPPPYYSPSPKVHYKSPPPPYVYNSPPPPYYSPSPKVYYKSPPPPYVYSSPPPPYYSPSPKVYYKSPPPPYVYSSPPPPYYSPSPKVYYKSPPPPYYSPSPKVYYKSPPHPHVCVCPPPPPCYSPSPKVVYKSPPPPYVYNSPPPPYYSPSPKVYYKSPPPPSYYSPSPKVEYKSPPPPSYSPSPKTEY.

The signal sequence occupies residues 1–22; the sequence is MGPSAHLISALGVIIMATMVAA. Positions 46–93 are disordered; the sequence is TPPLPYVDSSPPPTYTPAPEVEYKSPPPPYVYSSPPPPTYSPSPKVDY. Composition is skewed to pro residues over residues 47–61 and 70–86; these read PPLP…PTYT and SPPP…PTYS. 47 tandem repeats follow at residues 70-78, 79-94, 95-103, 104-119, 120-128, 129-144, 145-153, 154-169, 170-178, 179-194, 195-203, 204-219, 220-228, 229-244, 245-253, 254-269, 270-278, 279-294, 295-303, 304-319, 320-328, 329-344, 345-353, 354-369, 370-378, 379-394, 395-403, 404-419, 420-428, 429-444, 445-453, 454-469, 470-478, 479-494, 495-503, 504-519, 520-528, 529-544, 545-553, 554-569, 570-578, 579-594, 595-603, 604-619, 620-628, 629-644, and 645-660. Residues 70 to 628 form a 23 X 9 AA repeats of S-P-P-P-P-Y-V-Y-[SN] region; sequence SPPPPYVYSS…KSPPPPYVYS (559 aa). The tract at residues 79–660 is 24 X 16 AA repeats of S-P-P-P-P-[YT]-Y-S-P-S-P-K-V-[DEYH]-Y-K; it reads SPPPPTYSPS…YSPSPKVYYK (582 aa). Residues 715–743 form a disordered region; it reads PPSYYSPSPKVEYKSPPPPSYSPSPKTEY.

This sequence belongs to the extensin family. In terms of processing, extensins contain a characteristic repeat of the pentapeptide Ser-Pro(4). The proline residues are hydroxylated and then O-glycosylated (arabinosylation). Post-translationally, synthetised as soluble proteins which become insolubilised in the cell wall through the intermolecular cross-linking of Tyr on adjacent monomers. Isodityrosine (IDT) stabilizes and makes rigid the part of the polypeptide where IDT functional sites are present. Predominantly expressed in the roots.

It localises to the secreted. The protein localises to the primary cell wall. Its function is as follows. Structural component which strengthens the primary cell wall. This chain is Extensin-2, found in Arabidopsis thaliana (Mouse-ear cress).